Here is a 502-residue protein sequence, read N- to C-terminus: Pyruvate kinase (502 aa).

Arginine 54 contributes to the substrate binding site. K(+) contacts are provided by asparagine 56, serine 58, aspartate 88, and threonine 89. An ATP-binding site is contributed by 56–59 (NFSH). ATP-binding residues include arginine 95 and lysine 184. Glutamate 252 is a binding site for Mg(2+). Residues glycine 275, aspartate 276, and threonine 308 each coordinate substrate. Aspartate 276 serves as a coordination point for Mg(2+).

The protein belongs to the pyruvate kinase family. In terms of assembly, homotetramer. Requires Mg(2+) as cofactor. K(+) serves as cofactor.

The catalysed reaction is pyruvate + ATP = phosphoenolpyruvate + ADP + H(+). Its pathway is carbohydrate degradation; glycolysis; pyruvate from D-glyceraldehyde 3-phosphate: step 5/5. Regulated by phosphoenolpyruvate substrate and is allosterically activated by ribose-5-phosphate, AMP and other nucleoside monophosphates but not by fructose-1,6-bisphosphate. The protein is Pyruvate kinase (pyk) of Lactococcus lactis subsp. lactis (strain IL1403) (Streptococcus lactis).